Here is a 92-residue protein sequence, read N- to C-terminus: Small ribosomal subunit protein uS19 (92 aa).

The protein belongs to the universal ribosomal protein uS19 family.

Protein S19 forms a complex with S13 that binds strongly to the 16S ribosomal RNA. The chain is Small ribosomal subunit protein uS19 from Bacillus cytotoxicus (strain DSM 22905 / CIP 110041 / 391-98 / NVH 391-98).